We begin with the raw amino-acid sequence, 164 residues long: S-ribosylhomocysteine lyase (164 aa).

Fe cation-binding residues include His54, His58, and Cys128.

The protein belongs to the LuxS family. In terms of assembly, homodimer. Fe cation serves as cofactor.

It catalyses the reaction S-(5-deoxy-D-ribos-5-yl)-L-homocysteine = (S)-4,5-dihydroxypentane-2,3-dione + L-homocysteine. Involved in the synthesis of autoinducer 2 (AI-2) which is secreted by bacteria and is used to communicate both the cell density and the metabolic potential of the environment. The regulation of gene expression in response to changes in cell density is called quorum sensing. Catalyzes the transformation of S-ribosylhomocysteine (RHC) to homocysteine (HC) and 4,5-dihydroxy-2,3-pentadione (DPD). The chain is S-ribosylhomocysteine lyase from Campylobacter jejuni subsp. doylei (strain ATCC BAA-1458 / RM4099 / 269.97).